Consider the following 362-residue polypeptide: Atypical chemokine receptor 3 (362 aa).

Over 1-40 (MDLHLFDYSEPGNFSDISWPCNSSDCIVVDTVMCPNMPNK) the chain is Extracellular. Asn13, Asn22, and Asn39 each carry an N-linked (GlcNAc...) asparagine glycan. The chain crosses the membrane as a helical span at residues 41–61 (SVLLYTLSFIYIFIFVIGMIA). Topologically, residues 62–81 (NSVVVWVNIQAKTTGYDTHC) are cytoplasmic. Residues 82–102 (YILNLAIADLWVVLTIPVWVV) traverse the membrane as a helical segment. The Extracellular portion of the chain corresponds to 103–118 (SLVQHNQWPMGELTCK). Residues Cys117 and Cys196 are joined by a disulfide bond. A helical transmembrane segment spans residues 119-139 (VTHLIFSINLFGSIFFLTCMS). The Cytoplasmic segment spans residues 140–162 (VDRYLSITYFTNTPSSRKKMVRR). Residues 163–183 (VVCILVWLLAFCVSLPDTYYL) form a helical membrane-spanning segment. The Extracellular segment spans residues 184–213 (KTVTSASNNETYCRSFYPEHSIKEWLIGME). A helical transmembrane segment spans residues 214-234 (LVSVVLGFAVPFSIIAVFYFL). Over 235 to 252 (LARAISASSDQEKHSSRK) the chain is Cytoplasmic. Residues 253–273 (IIFSYVVVFLVCWLPYHVAVL) traverse the membrane as a helical segment. Residues 274–296 (LDIFSILHYIPFTCRLEHALFTA) lie on the Extracellular side of the membrane. A helical transmembrane segment spans residues 297–319 (LHVTQCLSLVHCCVNPVLYSFIN). Residues 320 to 362 (RNYRYELMKAFIFKYSAKTGLTKLIDASRVSETEYSALEQSTK) are Cytoplasmic-facing. Positions 324 to 362 (YELMKAFIFKYSAKTGLTKLIDASRVSETEYSALEQSTK) are C-terminal cytoplasmic tail. Residues Ser347, Ser350, and Ser355 each carry the phosphoserine modification.

It belongs to the G-protein coupled receptor 1 family. Atypical chemokine receptor subfamily. In terms of assembly, homodimer. Can form heterodimers with CXCR4; heterodimerization may regulate CXCR4 signaling activity. Interacts with ARRB1 and ARRB2. Post-translationally, the Ser/Thr residues in the C-terminal cytoplasmic tail may be phosphorylated. In terms of processing, ubiquitinated at the Lys residues in its C-terminal cytoplasmic tail and is essential for correct trafficking from and to the cell membrane. Deubiquitinated by CXCL12-stimulation in a reversible manner. In terms of tissue distribution, expressed in monocytes, basophils, B-cells, umbilical vein endothelial cells (HUVEC) and B-lymphoblastoid cells. Lower expression detected in CD4+ T-lymphocytes and natural killer cells. In the brain, detected in endothelial cells and capillaries, and in mature neurons of the frontal cortex and hippocampus. Expressed in tubular formation in the kidney. Highly expressed in astroglial tumor endothelial, microglial and glioma cells. Expressed at low levels in normal CD34+ progenitor cells, but at very high levels in several myeloid malignant cell lines. Expressed in breast carcinomas but not in normal breast tissue (at protein level).

It localises to the cell membrane. It is found in the early endosome. Its subcellular location is the recycling endosome. In terms of biological role, atypical chemokine receptor that controls chemokine levels and localization via high-affinity chemokine binding that is uncoupled from classic ligand-driven signal transduction cascades, resulting instead in chemokine sequestration, degradation, or transcytosis. Also known as interceptor (internalizing receptor) or chemokine-scavenging receptor or chemokine decoy receptor. Acts as a receptor for chemokines CXCL11 and CXCL12/SDF1. Chemokine binding does not activate G-protein-mediated signal transduction but instead induces beta-arrestin recruitment, leading to ligand internalization and activation of MAPK signaling pathway. Required for regulation of CXCR4 protein levels in migrating interneurons, thereby adapting their chemokine responsiveness. In glioma cells, transduces signals via MEK/ERK pathway, mediating resistance to apoptosis. Promotes cell growth and survival. Not involved in cell migration, adhesion or proliferation of normal hematopoietic progenitors but activated by CXCL11 in malignant hemapoietic cells, leading to phosphorylation of ERK1/2 (MAPK3/MAPK1) and enhanced cell adhesion and migration. Plays a regulatory role in CXCR4-mediated activation of cell surface integrins by CXCL12. Required for heart valve development. Regulates axon guidance in the oculomotor system through the regulation of CXCL12 levels. Its function is as follows. (Microbial infection) Acts as a coreceptor with CXCR4 for a restricted number of HIV isolates. The polypeptide is Atypical chemokine receptor 3 (Homo sapiens (Human)).